The primary structure comprises 82 residues: Omega-conotoxin-like TxMKLT1-031 (82 aa).

Residues 1–22 form the signal peptide; sequence MKLTCMMIVAVLFLTAWTLVMA. Positions 23–49 are excised as a propeptide; the sequence is DDSNNGLANLFSKSRDEMEDPEASKLE. Disulfide bonds link cysteine 53–cysteine 71, cysteine 60–cysteine 76, and cysteine 70–cysteine 81.

This sequence belongs to the conotoxin O1 superfamily. Expressed by the venom duct.

Its subcellular location is the secreted. Its function is as follows. Omega-conotoxins act at presynaptic membranes, they bind and block voltage-gated calcium channels (Cav). This chain is Omega-conotoxin-like TxMKLT1-031, found in Conus textile (Cloth-of-gold cone).